The chain runs to 644 residues: Exoribonuclease 2 (644 aa).

In terms of domain architecture, RNB spans 189–516 (REDLTALNFV…NHRLLKAMIT (328 aa)). Residues 561–643 (DTRFTAEIID…ETRNVIARPV (83 aa)) enclose the S1 motif domain.

Belongs to the RNR ribonuclease family. RNase II subfamily.

It is found in the cytoplasm. The enzyme catalyses Exonucleolytic cleavage in the 3'- to 5'-direction to yield nucleoside 5'-phosphates.. Involved in mRNA degradation. Hydrolyzes single-stranded polyribonucleotides processively in the 3' to 5' direction. The polypeptide is Exoribonuclease 2 (Yersinia pseudotuberculosis serotype IB (strain PB1/+)).